Reading from the N-terminus, the 148-residue chain is Leghemoglobin 3 (148 aa).

The Globin domain occupies 2–148 (GFTEKQEALV…LSAAIKKAMS (147 aa)). Nitrated tyrosine is present on Y30. S45 provides a ligand contact to heme b. At S45 the chain carries Phosphoserine. H63 contacts O2. The heme b site is built by K66, H95, and K98. At Y136 the chain carries Nitrated tyrosine.

It belongs to the plant globin family. As to quaternary structure, monomer. Post-translationally, nitrated in effective nodules and particularly in hypoxic conditions; this mechanism may play a protective role in the symbiosis by buffering toxic peroxynitrite NO(2)(-). Nitration level decrease during nodule senescence. In terms of processing, phosphorylation at Ser-45 disrupts the molecular environment of its porphyrin ring oxygen binding pocket, thus leading to a reduced oxygen consumption and to the delivery of oxygen O(2) to symbiosomes. As to expression, stem nodules.

The protein localises to the cytoplasm. It is found in the cytosol. It localises to the nucleus. Leghemoglobin that reversibly binds oxygen O(2) through a pentacoordinated heme iron. In stem nodules, facilitates the diffusion of oxygen to the bacteroids while preventing the bacterial nitrogenase from being inactivated by buffering dioxygen, nitric oxide and carbon monoxide, and promoting the formation of reactive oxygen species (ROS, e.g. H(2)O(2)). This role is essential for symbiotic nitrogen fixation (SNF). The protein is Leghemoglobin 3 of Sesbania rostrata.